The following is a 148-amino-acid chain: Probable histone H2B.1 (148 aa).

Over residues 1–32 (MAPKGEKKPAEKKPAEEKKSTVAEKAPAEKKP) the composition is skewed to basic and acidic residues. The tract at residues 1-57 (MAPKGEKKPAEKKPAEEKKSTVAEKAPAEKKPKAGKKLPKEGGSAAGEKKKKRSKKS) is disordered. An N6-acetyllysine mark is found at Lys7, Lys36, and Lys37. Residue Lys144 forms a Glycyl lysine isopeptide (Lys-Gly) (interchain with G-Cter in ubiquitin) linkage.

This sequence belongs to the histone H2B family. In terms of assembly, the nucleosome is a histone octamer containing two molecules each of H2A, H2B, H3 and H4 assembled in one H3-H4 heterotetramer and two H2A-H2B heterodimers. The octamer wraps approximately 147 bp of DNA. Post-translationally, can be acetylated to form H2BK6ac, H2BK33ac and H2BK34ac. Monoubiquitinated to form H2BK143ub1; may give a specific tag for epigenetic transcriptional activation.

It is found in the nucleus. The protein localises to the chromosome. Core component of nucleosome. Nucleosomes wrap and compact DNA into chromatin, limiting DNA accessibility to the cellular machineries which require DNA as a template. Histones thereby play a central role in transcription regulation, DNA repair, DNA replication and chromosomal stability. DNA accessibility is regulated via a complex set of post-translational modifications of histones, also called histone code, and nucleosome remodeling. This chain is Probable histone H2B.1, found in Medicago truncatula (Barrel medic).